The following is a 456-amino-acid chain: ATP synthase subunit beta 1 (456 aa).

Residue 152-159 (GGAGVGKS) participates in ATP binding.

It belongs to the ATPase alpha/beta chains family. In terms of assembly, F-type ATPases have 2 components, CF(1) - the catalytic core - and CF(0) - the membrane proton channel. CF(1) has five subunits: alpha(3), beta(3), gamma(1), delta(1), epsilon(1). CF(0) has three main subunits: a(1), b(2) and c(9-12). The alpha and beta chains form an alternating ring which encloses part of the gamma chain. CF(1) is attached to CF(0) by a central stalk formed by the gamma and epsilon chains, while a peripheral stalk is formed by the delta and b chains.

The protein resides in the cell membrane. It carries out the reaction ATP + H2O + 4 H(+)(in) = ADP + phosphate + 5 H(+)(out). Functionally, produces ATP from ADP in the presence of a proton gradient across the membrane. The catalytic sites are hosted primarily by the beta subunits. This chain is ATP synthase subunit beta 1, found in Listeria innocua serovar 6a (strain ATCC BAA-680 / CLIP 11262).